Here is a 518-residue protein sequence, read N- to C-terminus: Mitochondrial 2-methylisocitrate lyase (518 aa).

Belongs to the isocitrate lyase/PEP mutase superfamily. Isocitrate lyase family.

The protein localises to the mitochondrion matrix. It localises to the cytoplasm. The catalysed reaction is (2S,3R)-3-hydroxybutane-1,2,3-tricarboxylate = pyruvate + succinate. It functions in the pathway organic acid metabolism; propanoate degradation. Its function is as follows. Catalyzes the formation of pyruvate and succinate from 2-methylisocitrate during the metabolism of endogenous propionyl-CoA. Does not act on isocitrate. The sequence is that of Mitochondrial 2-methylisocitrate lyase (icl2) from Schizosaccharomyces pombe (strain 972 / ATCC 24843) (Fission yeast).